A 208-amino-acid polypeptide reads, in one-letter code: Guanylate kinase (208 aa).

The region spanning Gly3 to Val181 is the Guanylate kinase-like domain. Position 10 to 17 (Ala10 to Thr17) interacts with ATP.

The protein belongs to the guanylate kinase family.

It is found in the cytoplasm. It catalyses the reaction GMP + ATP = GDP + ADP. Essential for recycling GMP and indirectly, cGMP. The chain is Guanylate kinase from Psychrobacter arcticus (strain DSM 17307 / VKM B-2377 / 273-4).